We begin with the raw amino-acid sequence, 353 residues long: Protein-glutamate methylesterase/protein-glutamine glutaminase (353 aa).

In terms of domain architecture, Response regulatory spans 6–123; sequence RVLVIDDSAL…ARGLKAMLSE (118 aa). At Asp-57 the chain carries 4-aspartylphosphate. One can recognise a CheB-type methylesterase domain in the interval 159-351; sequence AESTDKVIAI…PRIVDLLSER (193 aa). Active-site residues include Ser-171, His-197, and Asp-293.

This sequence belongs to the CheB family. Phosphorylated by CheA. Phosphorylation of the N-terminal regulatory domain activates the methylesterase activity.

The protein localises to the cytoplasm. The enzyme catalyses [protein]-L-glutamate 5-O-methyl ester + H2O = L-glutamyl-[protein] + methanol + H(+). The catalysed reaction is L-glutaminyl-[protein] + H2O = L-glutamyl-[protein] + NH4(+). Involved in chemotaxis. Part of a chemotaxis signal transduction system that modulates chemotaxis in response to various stimuli. Catalyzes the demethylation of specific methylglutamate residues introduced into the chemoreceptors (methyl-accepting chemotaxis proteins or MCP) by CheR. Also mediates the irreversible deamidation of specific glutamine residues to glutamic acid. This chain is Protein-glutamate methylesterase/protein-glutamine glutaminase, found in Syntrophotalea carbinolica (strain DSM 2380 / NBRC 103641 / GraBd1) (Pelobacter carbinolicus).